The sequence spans 485 residues: Cytoplasmic tRNA 2-thiolation protein 2 (485 aa).

It belongs to the CTU2/NCS2 family.

It localises to the cytoplasm. The protein operates within tRNA modification; 5-methoxycarbonylmethyl-2-thiouridine-tRNA biosynthesis. In terms of biological role, plays a central role in 2-thiolation of mcm(5)S(2)U at tRNA wobble positions of tRNA(Lys), tRNA(Glu) and tRNA(Gln). May act by forming a heterodimer with NCS6 that ligates sulfur from thiocarboxylated URM1 onto the uridine of tRNAs at wobble position. Prior mcm(5) tRNA modification by the elongator complex is required for 2-thiolation. May also be involved in protein urmylation. This chain is Cytoplasmic tRNA 2-thiolation protein 2, found in Vanderwaltozyma polyspora (strain ATCC 22028 / DSM 70294 / BCRC 21397 / CBS 2163 / NBRC 10782 / NRRL Y-8283 / UCD 57-17) (Kluyveromyces polysporus).